The following is a 416-amino-acid chain: Protein sine oculis (416 aa).

Disordered regions lie at residues 32–91 and 262–329; these read TGLS…SGGG and VSNW…NNGL. Positions 42 to 57 are enriched in low complexity; sequence NNNNNNSSTSNNNNST. Gly residues predominate over residues 79–91; it reads NGGGGGGVVSGGG. Positions 218–277 form a DNA-binding region, homeobox; the sequence is GEETSYCFKEKSRSVLRDWYSHNPYPSPREKRDLAEATGLTTTQVSNWFKNRRQRDRAAE. Residues 273–290 show a composition bias toward basic and acidic residues; it reads DRAAEHKDGSTDKQHLDS. The segment covering 291 to 329 has biased composition (low complexity); it reads SSDSEMEGSMLPSQSAQHQQQQQQQQHSPGNSSGNNNGL.

Belongs to the SIX/Sine oculis homeobox family. In developing embryos, expressed in the eye disk epithelium, bolwig's organ and the optic lobe primordium at areas of invagination. In adults, present in photoreceptor cells in the apical regions of the retina, and in optic lobes.

It is found in the nucleus. In terms of biological role, required for visual system development. May transcriptionally regulate genes necessary for optic lobe invagination and Bolwig's nerve formation. This chain is Protein sine oculis (so), found in Drosophila melanogaster (Fruit fly).